A 175-amino-acid chain; its full sequence is Replication restart protein PriC (175 aa).

It belongs to the PriC family. In terms of assembly, monomer. Oligomerizes in the absence of DNA. Component of the replication restart primosome, which is composed of PriA, PriB, PriC, DnaB and DnaT; DnaG primase associates transiently with this complex. Interacts with the C-terminus of SSB; this interaction is required for DnaB loading onto substrate replication forks. Interacts with DnaB alone and in the DnaB-DnaC complex, probably 1:1 binding with DnaB.

Its function is as follows. Involved in the restart of stalled replication forks, which reloads the replicative helicase (DnaB) on sites other than the origin of replication. Recognizes abandoned replication forks and remodels DNA single-stranded binding protein (SSB) on ssDNA to uncover a loading site for DnaB. There are several restart pathways, the PriA-PriC pathway is a minor restart pathway. Also part of the minor PriC-Rep pathway for restart of stalled replication forks, which has a different substrate specificity than PriA. priB and priC have redundant roles in the cell. Stimulates the 3'-5' helicase activity of Rep helicase in vitro. In vitro can load the DnaB replicative helicase from a DnaB-DnaC complex on an SSB-coated stalled replication fork with no leading- or lagging-strand (or with a gap between the leading strand and fork junction) in the absence of other primosome proteins (PriA, PriB or DnaT). Also part of the major restart pathway with PriA, PriB, DnaB, DnaT and DnaG primase. PriC may contribute to the stability of the preprimosome complex. Preferentially binds approximately 7-9 nucleotides of single-stranded (ss)DNA, also binds double-stranded (ds)DNA. PriB is probably more important in the cell than PriC. In Escherichia coli (strain K12), this protein is Replication restart protein PriC.